The primary structure comprises 62 residues: Potassium channel toxin alpha-KTx 18.3 (62 aa).

The first 26 residues, 1 to 26 (MHFSGVAFILISMVLIGSIFETTVEA), serve as a signal peptide directing secretion. Cystine bridges form between Cys34–Cys53, Cys39–Cys58, and Cys43–Cys60.

It belongs to the short scorpion toxin superfamily. Potassium channel inhibitor family. Alpha-KTx 18 subfamily. Expressed by the venom gland.

The protein localises to the secreted. Its function is as follows. Probable voltage-gated potassium channel inhibitor. This Tityus discrepans (Venezuelan scorpion) protein is Potassium channel toxin alpha-KTx 18.3.